Reading from the N-terminus, the 52-residue chain is uncharacterized protein (52 aa).

The interval 1–52 (MVNNDAKIGRREFYDRVESVRPKSPPRERPTYTYSNSRTVDGYSNRGPRADF) is disordered. Basic and acidic residues predominate over residues 7 to 30 (KIGRREFYDRVESVRPKSPPRERP).

This is an uncharacterized protein from Dictyostelium discoideum (Social amoeba).